A 206-amino-acid chain; its full sequence is N-(5'-phosphoribosyl)anthranilate isomerase (206 aa).

The protein belongs to the TrpF family.

It carries out the reaction N-(5-phospho-beta-D-ribosyl)anthranilate = 1-(2-carboxyphenylamino)-1-deoxy-D-ribulose 5-phosphate. It functions in the pathway amino-acid biosynthesis; L-tryptophan biosynthesis; L-tryptophan from chorismate: step 3/5. This Pseudomonas putida (strain GB-1) protein is N-(5'-phosphoribosyl)anthranilate isomerase.